A 783-amino-acid polypeptide reads, in one-letter code: Outer membrane usher protein FanD (783 aa).

The first 23 residues, 1–23, serve as a signal peptide directing secretion; that stretch reads MNRKKHQILKILLLCLISSKSSA. Cys763 and Cys782 are oxidised to a cystine.

This sequence belongs to the fimbrial export usher family.

It localises to the cell outer membrane. Involved in the export and assembly of K99 fimbrial subunits across the outer membrane. This is Outer membrane usher protein FanD (fanD) from Escherichia coli.